The primary structure comprises 338 residues: Probable family 20 transposase (338 aa).

Belongs to the transposase 20 family.

In terms of biological role, required for the transposition of an insertion element. This chain is Probable family 20 transposase, found in Pseudomonas aeruginosa (strain ATCC 15692 / DSM 22644 / CIP 104116 / JCM 14847 / LMG 12228 / 1C / PRS 101 / PAO1).